The sequence spans 66 residues: Truncated interferon antagonist OPG039 (66 aa).

The stretch at 29 to 58 (HGHSALYYAIADNNMRLVCTLLNAGALKNL) is one ANK repeat.

The protein belongs to the orthopoxvirus OPG039 family.

In Homo sapiens (Human), this protein is Truncated interferon antagonist OPG039 (OPG040).